A 100-amino-acid polypeptide reads, in one-letter code: Osteocalcin (100 aa).

The signal sequence occupies residues 1–23 (MRTPMLLALLALATLCLAGRADA). Residues 24–51 (KPGDAESGKGAAFVSKQEGSEVVKRLRR) constitute a propeptide that is removed on maturation. A Gla domain is found at 52-98 (YLDHWLGAPAPYPDPLEPKREVCELNPDCDELADHIGFQEAYRRFYG). Position 60 is a 4-hydroxyproline (proline 60). Residues glutamate 68, glutamate 72, glutamate 75, and aspartate 81 each coordinate Ca(2+). 3 positions are modified to 4-carboxyglutamate: glutamate 68, glutamate 72, and glutamate 75. Cysteine 74 and cysteine 80 are joined by a disulfide.

This sequence belongs to the osteocalcin/matrix Gla protein family. Gamma-carboxyglutamate residues are formed by vitamin K dependent carboxylation by GGCX. These residues are essential for the binding of calcium. Decarboxylation promotes the hormone activity.

The protein localises to the secreted. Its function is as follows. The carboxylated form is one of the main organic components of the bone matrix, which constitutes 1-2% of the total bone protein. It acts as a negative regulator of bone formation and is required to limit bone formation without impairing bone resorption or mineralization. The carboxylated form binds strongly to apatite and calcium. In terms of biological role, the uncarboxylated form acts as a hormone secreted by osteoblasts, which regulates different cellular processes, such as energy metabolism, male fertility and brain development. Regulates of energy metabolism by acting as a hormone favoring pancreatic beta-cell proliferation, insulin secretion and sensitivity and energy expenditure. Uncarboxylated osteocalcin hormone also promotes testosterone production in the testes: acts as a ligand for G protein-coupled receptor GPRC6A at the surface of Leydig cells, initiating a signaling response that promotes the expression of enzymes required for testosterone synthesis in a CREB-dependent manner. Also acts as a regulator of brain development: osteocalcin hormone crosses the blood-brain barrier and acts as a ligand for GPR158 on neurons, initiating a signaling response that prevents neuronal apoptosis in the hippocampus, favors the synthesis of all monoamine neurotransmitters and inhibits that of gamma-aminobutyric acid (GABA). Osteocalcin also crosses the placenta during pregnancy and maternal osteocalcin is required for fetal brain development. The chain is Osteocalcin (BGLAP) from Bos taurus (Bovine).